Consider the following 341-residue polypeptide: MKALSKLKAEEGIWMTDVPQPELGHNDIMIKIRKTAICGTDVHIYNWDEWSQKTIPVPMVVGHEYVGEVVAIGQEVKGFNIGDRVSGEGHITCGHCRNCRGGRTHLCRNTVGVGVNRPGSFAEYLVIPAFNAFKIPDNISDELAAIFDPFGNAVHTALSFDLVGEDVLVSGAGPIGIMAAAVCKHVGARHVVITDVNEYRLDLARKMGVTRAVNVSKENLNDVMTELGMTEGFDVGLEMSGAPPAFRSLLNSMNHGGRIAMLGIPPSDMSIDWNQVIFKGLFIKGIYGREMFETWYKMAALIQSGLDLTPIITHRFPIDEFQQGFDAMRSGKSGKVVLSWD.

Cys38 provides a ligand contact to Zn(2+). Active-site charge relay system residues include Thr40 and His43. Residues His63, Glu64, Cys93, Cys96, Cys99, and Cys107 each contribute to the Zn(2+) site. Residues Ile175, Asp195, Arg200, 262-264 (LGI), and 286-287 (IY) each bind NAD(+).

The protein belongs to the zinc-containing alcohol dehydrogenase family. Homotetramer. Requires Zn(2+) as cofactor.

Its subcellular location is the cytoplasm. It catalyses the reaction L-threonine + NAD(+) = (2S)-2-amino-3-oxobutanoate + NADH + H(+). It participates in amino-acid degradation; L-threonine degradation via oxydo-reductase pathway; glycine from L-threonine: step 1/2. Its function is as follows. Catalyzes the NAD(+)-dependent oxidation of L-threonine to 2-amino-3-ketobutyrate. This is L-threonine 3-dehydrogenase from Yersinia pseudotuberculosis serotype O:1b (strain IP 31758).